We begin with the raw amino-acid sequence, 797 residues long: Methionine--tRNA ligase, cytoplasmic (797 aa).

The short motif at 26–36 (PYVNNVPHLGN) is the 'HIGH' region element. Positions 348–352 (KFSKS) match the 'KMSKS' region motif. Lysine 351 is a binding site for ATP. The segment at 601-634 (DQLNKTKLSDAKKQKASSKGGGKPKPQPAADREI) is disordered. One can recognise a tRNA-binding domain in the interval 635–738 (TMARLDIRVG…KTANIGERVT (104 aa)).

The protein belongs to the class-I aminoacyl-tRNA synthetase family.

The protein resides in the cytoplasm. It localises to the cytosol. It carries out the reaction tRNA(Met) + L-methionine + ATP = L-methionyl-tRNA(Met) + AMP + diphosphate. The chain is Methionine--tRNA ligase, cytoplasmic from Arabidopsis thaliana (Mouse-ear cress).